Here is a 393-residue protein sequence, read N- to C-terminus: Tryptophan synthase beta chain (393 aa).

K86 is subject to N6-(pyridoxal phosphate)lysine.

This sequence belongs to the TrpB family. Tetramer of two alpha and two beta chains. Pyridoxal 5'-phosphate is required as a cofactor.

It catalyses the reaction (1S,2R)-1-C-(indol-3-yl)glycerol 3-phosphate + L-serine = D-glyceraldehyde 3-phosphate + L-tryptophan + H2O. It participates in amino-acid biosynthesis; L-tryptophan biosynthesis; L-tryptophan from chorismate: step 5/5. Its function is as follows. The beta subunit is responsible for the synthesis of L-tryptophan from indole and L-serine. This chain is Tryptophan synthase beta chain, found in Alteromonas mediterranea (strain DSM 17117 / CIP 110805 / LMG 28347 / Deep ecotype).